The primary structure comprises 284 residues: Pantothenate synthetase (284 aa).

An ATP-binding site is contributed by 30–37 (MGALHEGH). Histidine 37 (proton donor) is an active-site residue. Glutamine 61 is a (R)-pantoate binding site. Glutamine 61 provides a ligand contact to beta-alanine. 147–150 (GEKD) lines the ATP pocket. Glutamine 153 provides a ligand contact to (R)-pantoate. ATP contacts are provided by residues valine 176 and 184–187 (TSSR).

It belongs to the pantothenate synthetase family. Homodimer.

The protein localises to the cytoplasm. The enzyme catalyses (R)-pantoate + beta-alanine + ATP = (R)-pantothenate + AMP + diphosphate + H(+). The protein operates within cofactor biosynthesis; (R)-pantothenate biosynthesis; (R)-pantothenate from (R)-pantoate and beta-alanine: step 1/1. Its function is as follows. Catalyzes the condensation of pantoate with beta-alanine in an ATP-dependent reaction via a pantoyl-adenylate intermediate. The polypeptide is Pantothenate synthetase (Chlorobaculum tepidum (strain ATCC 49652 / DSM 12025 / NBRC 103806 / TLS) (Chlorobium tepidum)).